Reading from the N-terminus, the 417-residue chain is Serine hydroxymethyltransferase (417 aa).

Residues L120 and 124–126 (GHL) contribute to the (6S)-5,6,7,8-tetrahydrofolate site. Position 229 is an N6-(pyridoxal phosphate)lysine (K229).

The protein belongs to the SHMT family. Homodimer. The cofactor is pyridoxal 5'-phosphate.

It localises to the cytoplasm. The enzyme catalyses (6R)-5,10-methylene-5,6,7,8-tetrahydrofolate + glycine + H2O = (6S)-5,6,7,8-tetrahydrofolate + L-serine. It participates in one-carbon metabolism; tetrahydrofolate interconversion. The protein operates within amino-acid biosynthesis; glycine biosynthesis; glycine from L-serine: step 1/1. Functionally, catalyzes the reversible interconversion of serine and glycine with tetrahydrofolate (THF) serving as the one-carbon carrier. This reaction serves as the major source of one-carbon groups required for the biosynthesis of purines, thymidylate, methionine, and other important biomolecules. Also exhibits THF-independent aldolase activity toward beta-hydroxyamino acids, producing glycine and aldehydes, via a retro-aldol mechanism. This chain is Serine hydroxymethyltransferase, found in Anaeromyxobacter dehalogenans (strain 2CP-C).